A 506-amino-acid chain; its full sequence is Probable cytochrome P450 309a1 (506 aa).

Phosphothreonine is present on residues Thr-75, Thr-78, and Thr-81. Cys-452 is a binding site for heme.

It belongs to the cytochrome P450 family. Heme serves as cofactor.

Its subcellular location is the endoplasmic reticulum membrane. It is found in the microsome membrane. In terms of biological role, may be involved in the metabolism of insect hormones and in the breakdown of synthetic insecticides. The polypeptide is Probable cytochrome P450 309a1 (Cyp309a1) (Drosophila melanogaster (Fruit fly)).